The following is a 446-amino-acid chain: MKRMIVRMTLPLLIVCLAFSSFSASARAASEEKYWDHWIERHAQPLDASNASNKDLRFLKKVLKGKRIVQLGETTHGAGEINATKVRMIKYLHEELGYDVLAFESGFPDTNASYLNMDQLTPKSTMKNSIYAVWHTEDVVELFDYMKEQKEKGDPLILTGFDIQSMKNSFNVAATQWVKAVDPEKAELLSQSENDFSTLVTDSNTFDEFSQKKEKLVKNYQKLIKFTKTHASELKENLPKEPKAYEMFMHSLQLRIDVMETYMLEEMKEKLEEYPENIEDFSFFMRDRMMAEQFQWVADTLYPKKKIIVWGHNYHLRKQNTKMIKDWVQLNGPNMGDYLPERLKKQTYTIGIYAYSGASLDSSDNKTVKPVTSPPPSGSLEALLKAADRPAVFVDFLHTKNKKGTSWMYTPRTALYWGYMEEQMILKEQYDGVIWLEHITPSVIIK.

An N-terminal signal peptide occupies residues 1–28 (MKRMIVRMTLPLLIVCLAFSSFSASARA).

The sequence is that of Putative hydrolase YbfO (ybfO) from Bacillus subtilis (strain 168).